A 315-amino-acid polypeptide reads, in one-letter code: WD repeat domain-containing protein 83 (315 aa).

WD repeat units lie at residues 23 to 62 (CGQGAVRAVRFNVDGNYCLTCGSDKTLKLWNPLRGTLLRT), 65 to 104 (GHGYEVLDAAGSFDNSSLCSGGGDKAVVLWDVASGQVVRK), 107 to 146 (GHAGKVNTVQFNEEATVILSGSIDSSIRCWDCRSRRPEPV), 151 to 188 (EARDGVSSVKVSDHEILAGSVDGRVRRYDLRMGQLFSD), 190 to 228 (VGSPITCTCFSRDGQCTLVSSLDSTLRLLDKDTGELLGE), 231 to 272 (GHKN…LALA), and 275 to 313 (VGSGVVQSLAYHPTEPCLLTAMGGSVQCWREEAYEAEDG).

It belongs to the WD repeat MORG1 family. As to quaternary structure, interacts with EGLN3/PHD3. Interacts with ERK signaling proteins MAP2K1/MEK1, MAP2K2/MEK2, LAMTOR3, ARAF/Raf-1, MAPK1/ERK2 and MAPK3/ERK1. Identified in the spliceosome C complex. Interacts with PARD6B and CRB3. Interacts strongly with GTP-bound RRAGA but not with inactive GDP-bound. Interacts with p62/SQSTM1.

The protein localises to the cytoplasm. Its subcellular location is the lysosome. It is found in the nucleus. In terms of biological role, molecular scaffold protein for various multimeric protein complexes. Acts as a module in the assembly of a multicomponent scaffold for the ERK pathway, linking ERK responses to specific agonists. At low concentrations it enhances ERK activation, whereas high concentrations lead to the inhibition of ERK activation. Also involved in response to hypoxia by acting as a negative regulator of HIF1A/HIF-1-alpha via its interaction with EGLN3/PHD3. May promote degradation of HIF1A. May act by recruiting signaling complexes to a specific upstream activator. May also be involved in pre-mRNA splicing. Participates in tight junction development by regulating apico-basal polarity, a key step in tissue development and organization. Mechanistically, regulates the translocation of PAR6-aPKC from the cytoplasm to the apical surface by acting as an adapter between PARD6B AND CRB3. Also acts as a negative regulator of mTORC1 under nutrient-rich conditions by binding to the active Rag GTPases to inhibit mTORC1 localization to the lysosome and phosphorylation of downstream targets. This facilitates constitutive basal autophagy during nutrient availability. The chain is WD repeat domain-containing protein 83 (WDR83) from Homo sapiens (Human).